The sequence spans 264 residues: S-adenosylmethionine decarboxylase proenzyme (264 aa).

Serine 111 serves as the catalytic Schiff-base intermediate with substrate; via pyruvic acid. Serine 111 carries the post-translational modification Pyruvic acid (Ser); by autocatalysis. The active-site Proton acceptor; for processing activity is histidine 116. Catalysis depends on cysteine 139, which acts as the Proton donor; for catalytic activity.

The protein belongs to the prokaryotic AdoMetDC family. Type 2 subfamily. In terms of assembly, heterooctamer of four alpha and four beta chains arranged as a tetramer of alpha/beta heterodimers. It depends on pyruvate as a cofactor. Post-translationally, is synthesized initially as an inactive proenzyme. Formation of the active enzyme involves a self-maturation process in which the active site pyruvoyl group is generated from an internal serine residue via an autocatalytic post-translational modification. Two non-identical subunits are generated from the proenzyme in this reaction, and the pyruvate is formed at the N-terminus of the alpha chain, which is derived from the carboxyl end of the proenzyme. The post-translation cleavage follows an unusual pathway, termed non-hydrolytic serinolysis, in which the side chain hydroxyl group of the serine supplies its oxygen atom to form the C-terminus of the beta chain, while the remainder of the serine residue undergoes an oxidative deamination to produce ammonia and the pyruvoyl group blocking the N-terminus of the alpha chain.

The enzyme catalyses S-adenosyl-L-methionine + H(+) = S-adenosyl 3-(methylsulfanyl)propylamine + CO2. Its pathway is amine and polyamine biosynthesis; S-adenosylmethioninamine biosynthesis; S-adenosylmethioninamine from S-adenosyl-L-methionine: step 1/1. Catalyzes the decarboxylation of S-adenosylmethionine to S-adenosylmethioninamine (dcAdoMet), the propylamine donor required for the synthesis of the polyamines spermine and spermidine from the diamine putrescine. The protein is S-adenosylmethionine decarboxylase proenzyme of Geobacillus thermodenitrificans (strain NG80-2).